The chain runs to 352 residues: Sulfate-binding protein (352 aa).

The signal sequence occupies residues 1 to 40 (MARSAFGWGFSVIAVLMVGSITACNTTTTTEPGQGENASQ).

It belongs to the prokaryotic sulfate-binding protein family.

It is found in the periplasm. This protein specifically binds sulfate and is involved in its transmembrane transport. This Synechocystis sp. (strain ATCC 27184 / PCC 6803 / Kazusa) protein is Sulfate-binding protein (sbpA).